We begin with the raw amino-acid sequence, 1036 residues long: Multidrug resistance protein MdtC (1036 aa).

The next 10 membrane-spanning stretches (helical) occupy residues 12-34 (VATT…LLPV), 336-353 (RALV…FLFL), 360-382 (LIPA…LCGF), 431-450 (VGFT…IPLL), 463-485 (FAIT…TPMM), 528-547 (WVLL…YINI), 853-875 (LFLI…ESYI), 895-917 (LELF…IGIV), 949-971 (LRFR…LVLS), and 986-1008 (IVGG…YLCF).

The protein belongs to the resistance-nodulation-cell division (RND) (TC 2.A.6) family. MdtC subfamily. Part of a tripartite efflux system composed of MdtA, MdtB and MdtC. MdtC forms a heteromultimer with MdtB.

The protein localises to the cell inner membrane. This is Multidrug resistance protein MdtC from Photorhabdus laumondii subsp. laumondii (strain DSM 15139 / CIP 105565 / TT01) (Photorhabdus luminescens subsp. laumondii).